Consider the following 248-residue polypeptide: Triosephosphate isomerase (248 aa).

Substrate is bound at residue 9–11 (NWK). The Electrophile role is filled by His94. The Proton acceptor role is filled by Glu166. Substrate-binding positions include Gly172, Ser211, and 232-233 (GG).

The protein belongs to the triosephosphate isomerase family. In terms of assembly, homodimer.

The protein resides in the cytoplasm. It carries out the reaction D-glyceraldehyde 3-phosphate = dihydroxyacetone phosphate. It functions in the pathway carbohydrate biosynthesis; gluconeogenesis. It participates in carbohydrate degradation; glycolysis; D-glyceraldehyde 3-phosphate from glycerone phosphate: step 1/1. Its function is as follows. Involved in the gluconeogenesis. Catalyzes stereospecifically the conversion of dihydroxyacetone phosphate (DHAP) to D-glyceraldehyde-3-phosphate (G3P). The polypeptide is Triosephosphate isomerase (Herminiimonas arsenicoxydans).